Consider the following 291-residue polypeptide: MMYSFIARNKINTFLILFVFILACGGFGLLAGRFLGMSFFLFILLLAAGYACVQYFFSGRLAVLMSGARKISRNDNPRLWNTVENLSITTGLPMPEVYIVDDPAPNAFATGRDPKHAKVAATSGLLEILDDSELEGVMAHEMGHVKNYDIRVSTIVFGLVSAVGLISDMVLRALIWGDNRREGNSAFSFAIVLFFSLLAPIAAMLVQLAVSREREYLADATGALTTRYPAALASALAKLEGNARPLQRQSSSMAHLWISNPMPRGFFRKLFSTHPPTEERIRRLKEMGNQF.

2 consecutive transmembrane segments (helical) span residues 11–31 (INTF…GLLA) and 34–54 (FLGM…ACVQ). Residue histidine 140 participates in Zn(2+) binding. The active site involves glutamate 141. Residue histidine 144 coordinates Zn(2+). Transmembrane regions (helical) follow at residues 155–175 (IVFG…RALI) and 186–206 (AFSF…AMLV). Residue glutamate 215 coordinates Zn(2+).

Belongs to the peptidase M48B family. The cofactor is Zn(2+).

The protein resides in the cell membrane. This chain is Protease HtpX homolog, found in Tropheryma whipplei (strain TW08/27) (Whipple's bacillus).